A 313-amino-acid polypeptide reads, in one-letter code: Pantothenate synthetase (313 aa).

Residue 43–50 participates in ATP binding; that stretch reads MGALHEGH. H50 acts as the Proton donor in catalysis. Q75 contacts (R)-pantoate. Q75 is a binding site for beta-alanine. Residue 161 to 164 coordinates ATP; sequence GEKD. Residue Q167 participates in (R)-pantoate binding. Residues V190 and 198–201 contribute to the ATP site; that span reads LSSR.

Belongs to the pantothenate synthetase family. Homodimer.

It is found in the cytoplasm. The catalysed reaction is (R)-pantoate + beta-alanine + ATP = (R)-pantothenate + AMP + diphosphate + H(+). Its pathway is cofactor biosynthesis; (R)-pantothenate biosynthesis; (R)-pantothenate from (R)-pantoate and beta-alanine: step 1/1. Catalyzes the condensation of pantoate with beta-alanine in an ATP-dependent reaction via a pantoyl-adenylate intermediate. In Mycobacterium sp. (strain KMS), this protein is Pantothenate synthetase.